Consider the following 473-residue polypeptide: M-phase inducer phosphatase 3 (473 aa).

The interval 1 to 23 is disordered; that stretch reads MSTELFSSTREEGSSGSGPSFRS. An N-acetylserine modification is found at Ser-2. Residues Ser-20 and Ser-38 each carry the phosphoserine modification. Residue Thr-48 is modified to Phosphothreonine. Phosphoserine is present on residues Ser-57, Ser-61, and Ser-64. Thr-67 is subject to Phosphothreonine. Ser-122 carries the phosphoserine; by CDK1 modification. Ser-129 carries the post-translational modification Phosphoserine. Residue Thr-130 is modified to Phosphothreonine. The interval 132–158 is disordered; the sequence is NGLDRGHRKRDAMCSSSANKENDNGNL. Residues 145-158 are compositionally biased toward polar residues; sequence CSSSANKENDNGNL. At Ser-168 the chain carries Phosphoserine. Phosphoserine; by PLK3 is present on residues Ser-191 and Ser-198. A Phosphoserine; by CDK1 modification is found at Ser-214. Ser-216 is modified (phosphoserine; by CHEK1, CHEK2, BRSK1, MAPK14 AND MARK3). The region spanning 321-428 is the Rhodanese domain; the sequence is LIEKFYVIDC…FFPEYMELCE (108 aa). The segment at 334-379 is HIV-1 Vpr binding site; the sequence is YEYLGGHIQGALNLYSQEELFNFFLKKPIVPLDTQKRIIIVFHCEF. Cys-377 is a catalytic residue. Ser-472 carries the post-translational modification Phosphoserine.

It belongs to the MPI phosphatase family. As to quaternary structure, interacts with MAPK14 and 14-3-3 proteins. When phosphorylated on Ser-129 and/or Thr-130, interacts with PLK1. Interacts with MARK3/C-TAK1. (Microbial infection) Interacts with HIV-1 Vpr; this interaction inactivates CDC25C phosphatase activity. In terms of processing, phosphorylated by CHEK1 and MAPK14 at Ser-216. This phosphorylation creates a binding site for 14-3-3 protein and inhibits the phosphatase. Phosphorylated by PLK4. Phosphorylated by PLK1, leading to activate the phosphatase activity. Phosphorylation by PLK3 at Ser-191 promotes nuclear translocation. Ser-198 is a minor phosphorylation site. Was initially reported to be phosphorylated by PLK3 at Ser-216. However, such phosphorylation by PLK3 was not confirmed by other groups. Phosphorylation at Thr-48, Thr-67, Ser-122, Thr-130, Ser-168 and Ser-214 occurs at G2 and G2-M transition and is probably catalyzed by CDK1. Ser-168 phosphorylation levels are lower than those at the other 5 CDK1 sites. Phosphorylation by CDK1 leads to increased activity.

It localises to the nucleus. The enzyme catalyses O-phospho-L-tyrosyl-[protein] + H2O = L-tyrosyl-[protein] + phosphate. Its function is as follows. Functions as a dosage-dependent inducer in mitotic control. Tyrosine protein phosphatase required for progression of the cell cycle. When phosphorylated, highly effective in activating G2 cells into prophase. Directly dephosphorylates CDK1 and activates its kinase activity. The sequence is that of M-phase inducer phosphatase 3 (CDC25C) from Homo sapiens (Human).